Reading from the N-terminus, the 360-residue chain is Protein MGF 360-2L (360 aa).

The protein belongs to the asfivirus MGF 360 family.

Functionally, plays a role in virus cell tropism, and may be required for efficient virus replication in macrophages. In Ornithodoros (relapsing fever ticks), this protein is Protein MGF 360-2L.